A 138-amino-acid chain; its full sequence is Gastrula zinc finger protein XlCGF44.2 (138 aa).

5 C2H2-type zinc fingers span residues 5 to 27, 32 to 54, 60 to 82, 88 to 110, and 116 to 138; these read FACT…KRIH, FVCA…QRLH, FTCT…QQIH, YVCS…MKTH, and FACS…QESH.

It belongs to the krueppel C2H2-type zinc-finger protein family.

The protein localises to the nucleus. Functionally, may be involved in transcriptional regulation. This is Gastrula zinc finger protein XlCGF44.2 from Xenopus laevis (African clawed frog).